Here is a 92-residue protein sequence, read N- to C-terminus: Large ribosomal subunit protein bL31 (92 aa).

This sequence belongs to the bacterial ribosomal protein bL31 family. Type A subfamily. As to quaternary structure, part of the 50S ribosomal subunit.

In terms of biological role, binds the 23S rRNA. The sequence is that of Large ribosomal subunit protein bL31 from Mesoplasma florum (strain ATCC 33453 / NBRC 100688 / NCTC 11704 / L1) (Acholeplasma florum).